The chain runs to 128 residues: Small ribosomal subunit protein uS14m (128 aa).

This sequence belongs to the universal ribosomal protein uS14 family. In terms of assembly, component of the mitochondrial ribosome small subunit (28S) which comprises a 12S rRNA and about 30 distinct proteins. Interacts with LIAT1.

Its subcellular location is the mitochondrion. The sequence is that of Small ribosomal subunit protein uS14m (Mrps14) from Mus musculus (Mouse).